The chain runs to 49 residues: Large ribosomal subunit protein bL33B (49 aa).

It belongs to the bacterial ribosomal protein bL33 family.

The polypeptide is Large ribosomal subunit protein bL33B (Latilactobacillus sakei subsp. sakei (strain 23K) (Lactobacillus sakei subsp. sakei)).